A 416-amino-acid chain; its full sequence is UBX domain-containing protein 4 (416 aa).

Residues 273 to 350 (KAISECLLRV…EFGSKTMLLF (78 aa)) enclose the UBX domain. The segment at 376-402 (TRTTPSVNTINKSNPQGPSDNATSIKK) is disordered. Residues 378-402 (TTPSVNTINKSNPQGPSDNATSIKK) show a composition bias toward polar residues.

The protein resides in the nucleus. It is found in the cytoplasm. Functionally, involved in CDC48-dependent protein degradation through the ubiquitin/proteasome pathway. The polypeptide is UBX domain-containing protein 4 (UBX4) (Saccharomyces cerevisiae (strain ATCC 204508 / S288c) (Baker's yeast)).